A 2035-amino-acid chain; its full sequence is Envoplakin (2035 aa).

The span at 1-27 (MFKGLSKGSQGKGSPKGSPAKGSPKGS) shows a compositional bias: low complexity. 2 disordered regions span residues 1 to 37 (MFKGLSKGSQGKGSPKGSPAKGSPKGSPNKHNRAATQ) and 63 to 84 (KLQQDRQNGEQNQALQHQQETG). Positions 1–841 (MFKGLSKGSQ…LEPALAVSAP (841 aa)) are globular 1. The 4 X 4 AA tandem repeats of K-G-S-P stretch occupies residues 12-28 (KGSPKGSPAKGSPKGSP). Over residues 71 to 84 (GEQNQALQHQQETG) the composition is skewed to polar residues. The Spectrin repeat unit spans residues 229–330 (YTHLQGCTKQ…LCICQESQLQ (102 aa)). A disordered region spans residues 400–419 (QEVAPLPQRRNPSKQPLHVD). Residues 413 to 470 (KQPLHVDSICDWDSGEVQLLRGERYTLKDNADPYTWLVQGPGGETKSAPAACLCIPAP) form the SH3 domain. Residues 842–1664 (KRLRVISLQE…EKERTLRDLH (823 aa)) adopt a coiled-coil conformation. Positions 842-1674 (KRLRVISLQE…TKVSREELNQ (833 aa)) are central fibrous rod domain. A Plectin 1 repeat occupies 1186 to 1227 (KQKPKVQLQERVSEIFQVLPETEQEIRRLRAQLQETGSKKSG). Ser1576 carries the phosphoserine modification. The span at 1607–1631 (KQQKARQLQEEGRLLSQKTESERQK) shows a compositional bias: basic and acidic residues. The interval 1607–1637 (KQQKARQLQEEGRLLSQKTESERQKAAQRSQ) is disordered. A globular 2 region spans residues 1675-2035 (ETQTRETNLS…SPTLPRSCVR (361 aa)). A Plectin 2 repeat occupies 1679–1714 (RETNLSTKICILEPETGNDMSPYEAYKRGVIDRGQY). Ser1800 is modified (phosphoserine). 5 Plectin repeats span residues 1819–1856 (FGLTEDSFPIAGIYDTTTDNKCSIKAAVAKNMLDPITG), 1857–1894 (QKLLEAQAATGGIVDLLSRERYSVHKAVERGLIENTST), 1895–1932 (QRLLNAQKAFTGIEDPVTRKRLSVGEAIQKGWMPQESV), 1933–1970 (LPHLLVQHLTGGLIDPKRTGRIPVPQAVLCGMISEDLG), and 1971–2008 (QLLQDESGYEKDLTDPITKERLSYKEAMGRCRKDPLSG). Ser2026 carries the phosphoserine modification.

Belongs to the plakin or cytolinker family. In terms of assembly, may form a homodimer or a heterodimer with PPL.

The protein resides in the cell junction. It is found in the desmosome. It localises to the cornified envelope. Its subcellular location is the cytoplasm. The protein localises to the cytoskeleton. Component of the cornified envelope of keratinocytes. May link the cornified envelope to desmosomes and intermediate filaments. The polypeptide is Envoplakin (Evpl) (Mus musculus (Mouse)).